The following is a 230-amino-acid chain: 7-cyano-7-deazaguanine synthase (230 aa).

7–17 (CSGGLDSVSLA) contributes to the ATP binding site. The Zn(2+) site is built by Cys-185, Cys-193, Cys-196, and Cys-199.

Belongs to the QueC family. Zn(2+) is required as a cofactor.

The catalysed reaction is 7-carboxy-7-deazaguanine + NH4(+) + ATP = 7-cyano-7-deazaguanine + ADP + phosphate + H2O + H(+). It functions in the pathway purine metabolism; 7-cyano-7-deazaguanine biosynthesis. Its function is as follows. Catalyzes the ATP-dependent conversion of 7-carboxy-7-deazaguanine (CDG) to 7-cyano-7-deazaguanine (preQ(0)). The protein is 7-cyano-7-deazaguanine synthase of Ruegeria pomeroyi (strain ATCC 700808 / DSM 15171 / DSS-3) (Silicibacter pomeroyi).